Reading from the N-terminus, the 944-residue chain is Protein translocase subunit SecA (944 aa).

ATP contacts are provided by residues glutamine 77, 95–99 (GEGKT), and aspartate 484. Positions 920–944 (EQEKQTKKKKKKKPHDDETTKVKIG) are disordered. A compositionally biased stretch (basic and acidic residues) spans 933-944 (PHDDETTKVKIG).

It belongs to the SecA family. Monomer and homodimer. Part of the essential Sec protein translocation apparatus which comprises SecA, SecYEG and auxiliary proteins SecDF. Other proteins may also be involved.

It is found in the cell membrane. The protein resides in the cytoplasm. It carries out the reaction ATP + H2O + cellular proteinSide 1 = ADP + phosphate + cellular proteinSide 2.. Its function is as follows. Part of the Sec protein translocase complex. Interacts with the SecYEG preprotein conducting channel. Has a central role in coupling the hydrolysis of ATP to the transfer of proteins into and across the cell membrane, serving as an ATP-driven molecular motor driving the stepwise translocation of polypeptide chains across the membrane. This is Protein translocase subunit SecA from Mycoplasma capricolum subsp. capricolum (strain California kid / ATCC 27343 / NCTC 10154).